The primary structure comprises 600 residues: Elongation factor 4 (600 aa).

Positions 4–186 constitute a tr-type G domain; sequence SKIRNFSIIA…AIVEKIPSPS (183 aa). GTP is bound by residues 16–21 and 133–136; these read DHGKST and NKID.

The protein belongs to the TRAFAC class translation factor GTPase superfamily. Classic translation factor GTPase family. LepA subfamily.

The protein localises to the cell membrane. The catalysed reaction is GTP + H2O = GDP + phosphate + H(+). Functionally, required for accurate and efficient protein synthesis under certain stress conditions. May act as a fidelity factor of the translation reaction, by catalyzing a one-codon backward translocation of tRNAs on improperly translocated ribosomes. Back-translocation proceeds from a post-translocation (POST) complex to a pre-translocation (PRE) complex, thus giving elongation factor G a second chance to translocate the tRNAs correctly. Binds to ribosomes in a GTP-dependent manner. This is Elongation factor 4 from Mycoplasma mycoides subsp. mycoides SC (strain CCUG 32753 / NCTC 10114 / PG1).